The chain runs to 831 residues: MKQNLISSVQIILLLPLTTVGLTSQSFPGKPKIIRCRSLEKETFSCWWKPGSDGGLPTNYTLFYSKDSEEKIYECPDYRTSGPNSCYFNRNYTNSWTTYNITVTATNEIGSNSSDPQYVDVTSIVQPGSPVNLTLETQRYANIMYLWAKWSPPLLADASSNHLYHYELRLKPEEKEEWETVPVGVQTQCKINRLNAGMRYVVQVRCMLDPGEWSEWSSERRILISGGLSPPEKPTITKCRSPEKETFTCWWKPGLDGGHPTNYTLLYSKEGEEQVYECPDYRTAGPNSCYFDKKHTSFWTVYNITVKATNEMGSNSSDPHYVDVTYIVQPDPPANVTLELKKPINRKPYLMLTWSPPPLADVRSGWLTLDYELRLKPEEGEEWETVFVGQQTQYKMFSLNPGKKYIVQIHCKPDHHGSWSEWSSENYIEIPNDFRVKDMIVWIVLGVLSSLICLIMSWTMVLKGYRMITFILPPVPGPKIKGIDTHLLETGKSEELLSALGCHGFPPTSDCEELLIEYLEVEDSEDHQLMPSHDSGRPSKNAKITLKETDRDSGRGSCDSPSLLSEKCRETCALPSALQIQDVRDVQAKKAGKRSWESYCVASERKALLFNNESAKSSTWPAVQLPNNQPPTFAYHSIVEANKITSTTTNMNVAAVLVENEERHQSLYSISETISGGMEKQEEMENLHSKTTQTTVQVRQNRSNEKLPFLNAALMDYVEVHKVRQDEEPTVLLKHKEKSGKIEKYTISGASKEYTKVSTVMNHNILVLMPDSRVLHTPTSQEEPAKETSQNPQQGQVETNMSYCMTAPRDCQREPSGSEYMDPSSFMPSFK.

The first 23 residues, methionine 1–threonine 23, serve as a signal peptide directing secretion. At serine 24–aspartate 438 the chain is on the extracellular side. 4 consecutive Fibronectin type-III domains span residues lysine 30–glycine 128, serine 129–glutamate 232, lysine 233–aspartate 331, and proline 332–aspartate 433. Residues cysteine 36 and cysteine 46 are joined by a disulfide bond. A glycan (N-linked (GlcNAc...) asparagine) is linked at asparagine 59. Cysteine 75 and cysteine 86 are oxidised to a cystine. N-linked (GlcNAc...) asparagine glycans are attached at residues asparagine 91, asparagine 100, asparagine 112, asparagine 132, asparagine 262, asparagine 303, asparagine 315, and asparagine 335. Positions 414 and 416 each coordinate Zn(2+). Positions tryptophan 419 to serine 423 match the WSXWS motif motif. Residues methionine 439 to threonine 459 form a helical membrane-spanning segment. The Cytoplasmic portion of the chain corresponds to methionine 460–lysine 831. Positions isoleucine 471–lysine 479 match the Box 1 motif motif. Disordered regions lie at residues histidine 527–leucine 563 and histidine 776–lysine 831. Basic and acidic residues predominate over residues threonine 545–glycine 554. A compositionally biased stretch (polar residues) spans threonine 777–tyrosine 803.

It belongs to the type I cytokine receptor family. Type 1 subfamily.

It is found in the membrane. This is a receptor for the anterior pituitary hormone prolactin. The protein is Prolactin receptor (PRLR) of Meleagris gallopavo (Wild turkey).